The primary structure comprises 445 residues: POU domain, class 5, transcription factor 1.2 (445 aa).

2 stretches are compositionally biased toward polar residues: residues 76 to 88 (SANQ…QGNP) and 164 to 182 (IFTS…SLDN). 2 disordered regions span residues 76–116 (SANQ…PSLP) and 139–227 (TTVV…GEME). Positions 183 to 200 (SRCSSATSSSSGGTNVGT) are enriched in low complexity. Positions 218–292 (EEAPNSGEME…LLRSWLHEVE (75 aa)) constitute a POU-specific domain. A DNA-binding region (homeobox) is located at residues 312–371 (KRKHRTSIENNVKCTLENYFMQCSKPSAQEIAQIARELNMEKDVVRVWFCNRRQKGKRQV).

This sequence belongs to the POU transcription factor family. Class-5 subfamily. As to quaternary structure, interacts with the transcription factors tcf7l1/tcf3 and vegt. As to expression, initially (stage 9) expressed in all regions of the embryo, becoming localized to the ventroposterior regions by early neurula stages. In adults, expressed at a low level in the brain.

It is found in the nucleus. In terms of biological role, transcription factor that binds to the octamer motif (5'-ATTTGCAT-3'). Antagonizes the activity of nodal/activin signaling during gastrulation to suppress mesendoderm formation. This is POU domain, class 5, transcription factor 1.2 (pou5f1.2) from Xenopus laevis (African clawed frog).